A 541-amino-acid polypeptide reads, in one-letter code: Eukaryotic translation initiation factor 3 subunit D-1 (541 aa).

Residues 98–136 (VQKPPHQRGRFRNMRGRGGRGRNPRGGLNNHHHHGMTTL) are disordered. The segment covering 100–120 (KPPHQRGRFRNMRGRGGRGRN) has biased composition (basic residues).

Belongs to the eIF-3 subunit D family. In terms of assembly, component of the eukaryotic translation initiation factor 3 (eIF-3) complex. The eIF-3 complex interacts with pix.

Its subcellular location is the cytoplasm. MRNA cap-binding component of the eukaryotic translation initiation factor 3 (eIF-3) complex, which is involved in protein synthesis of a specialized repertoire of mRNAs and, together with other initiation factors, stimulates binding of mRNA and methionyl-tRNAi to the 40S ribosome. The eIF-3 complex specifically targets and initiates translation of a subset of mRNAs involved in cell proliferation. In the eIF-3 complex, eif3d specifically recognizes and binds the 7-methylguanosine cap of a subset of mRNAs. This Drosophila persimilis (Fruit fly) protein is Eukaryotic translation initiation factor 3 subunit D-1.